The chain runs to 382 residues: Anhydro-N-acetylmuramic acid kinase (382 aa).

Position 15–22 (15–22) interacts with ATP; the sequence is GTSLDGVD.

This sequence belongs to the anhydro-N-acetylmuramic acid kinase family.

It carries out the reaction 1,6-anhydro-N-acetyl-beta-muramate + ATP + H2O = N-acetyl-D-muramate 6-phosphate + ADP + H(+). The protein operates within amino-sugar metabolism; 1,6-anhydro-N-acetylmuramate degradation. It functions in the pathway cell wall biogenesis; peptidoglycan recycling. In terms of biological role, catalyzes the specific phosphorylation of 1,6-anhydro-N-acetylmuramic acid (anhMurNAc) with the simultaneous cleavage of the 1,6-anhydro ring, generating MurNAc-6-P. Is required for the utilization of anhMurNAc either imported from the medium or derived from its own cell wall murein, and thus plays a role in cell wall recycling. This is Anhydro-N-acetylmuramic acid kinase from Haemophilus influenzae (strain ATCC 51907 / DSM 11121 / KW20 / Rd).